We begin with the raw amino-acid sequence, 209 residues long: MAGSTAEQHGDGPLVGVLALQGDVREHVRVLQGFGARTRLVRQPKDLPGISGLVIPGGESTVMDKLSRQFGIAGPLRSAIDDGLPVYGTCAGLIMLADEIVDAIHDQRSIGGLDVSVRRNAFGSQTASFEVDLDVPALGDPPVHAVFIRAPVVASVGPAASALASLDDGRVVAVRQGALLGTSFHPEVTGDLRFHRLFLDMVEDAGRTL.

58 to 60 (GES) serves as a coordination point for L-glutamine. The active-site Nucleophile is the Cys90. L-glutamine contacts are provided by residues Arg119 and 148–149 (IR). Catalysis depends on charge relay system residues His185 and Glu187.

This sequence belongs to the glutaminase PdxT/SNO family. As to quaternary structure, in the presence of PdxS, forms a dodecamer of heterodimers. Only shows activity in the heterodimer.

The catalysed reaction is aldehydo-D-ribose 5-phosphate + D-glyceraldehyde 3-phosphate + L-glutamine = pyridoxal 5'-phosphate + L-glutamate + phosphate + 3 H2O + H(+). It catalyses the reaction L-glutamine + H2O = L-glutamate + NH4(+). The protein operates within cofactor biosynthesis; pyridoxal 5'-phosphate biosynthesis. Catalyzes the hydrolysis of glutamine to glutamate and ammonia as part of the biosynthesis of pyridoxal 5'-phosphate. The resulting ammonia molecule is channeled to the active site of PdxS. This chain is Pyridoxal 5'-phosphate synthase subunit PdxT, found in Clavibacter michiganensis subsp. michiganensis (strain NCPPB 382).